Here is a 1343-residue protein sequence, read N- to C-terminus: DNA-directed RNA polymerase subunit beta (1343 aa).

This sequence belongs to the RNA polymerase beta chain family. As to quaternary structure, the RNAP catalytic core consists of 2 alpha, 1 beta, 1 beta' and 1 omega subunit. When a sigma factor is associated with the core the holoenzyme is formed, which can initiate transcription.

It carries out the reaction RNA(n) + a ribonucleoside 5'-triphosphate = RNA(n+1) + diphosphate. Its function is as follows. DNA-dependent RNA polymerase catalyzes the transcription of DNA into RNA using the four ribonucleoside triphosphates as substrates. This Shewanella woodyi (strain ATCC 51908 / MS32) protein is DNA-directed RNA polymerase subunit beta.